The following is a 620-amino-acid chain: Proline--tRNA ligase (620 aa).

Belongs to the class-II aminoacyl-tRNA synthetase family. ProS type 1 subfamily. Homodimer.

Its subcellular location is the cytoplasm. The catalysed reaction is tRNA(Pro) + L-proline + ATP = L-prolyl-tRNA(Pro) + AMP + diphosphate. Its function is as follows. Catalyzes the attachment of proline to tRNA(Pro) in a two-step reaction: proline is first activated by ATP to form Pro-AMP and then transferred to the acceptor end of tRNA(Pro). As ProRS can inadvertently accommodate and process non-cognate amino acids such as alanine and cysteine, to avoid such errors it has two additional distinct editing activities against alanine. One activity is designated as 'pretransfer' editing and involves the tRNA(Pro)-independent hydrolysis of activated Ala-AMP. The other activity is designated 'posttransfer' editing and involves deacylation of mischarged Ala-tRNA(Pro). The misacylated Cys-tRNA(Pro) is not edited by ProRS. The protein is Proline--tRNA ligase of Streptococcus suis (strain 98HAH33).